A 716-amino-acid chain; its full sequence is ATP-dependent DNA helicase DinG (716 aa).

The Helicase ATP-binding domain maps to alanine 17–threonine 294. Alanine 54–threonine 61 contributes to the ATP binding site. Cysteine 120 is a [4Fe-4S] cluster binding site. A DEAH box motif is present at residues glutamate 131–glutamine 134. The [4Fe-4S] cluster site is built by cysteine 194, cysteine 199, and cysteine 205. Positions aspartate 248–histidine 251 match the DEAH box motif. The Helicase C-terminal domain maps to alanine 487–proline 698.

Belongs to the helicase family. DinG subfamily. Type 1 sub-subfamily. Requires [4Fe-4S] cluster as cofactor.

It carries out the reaction Couples ATP hydrolysis with the unwinding of duplex DNA at the replication fork by translocating in the 5'-3' direction. This creates two antiparallel DNA single strands (ssDNA). The leading ssDNA polymer is the template for DNA polymerase III holoenzyme which synthesizes a continuous strand.. The catalysed reaction is ATP + H2O = ADP + phosphate + H(+). DNA-dependent ATPase and 5'-3' DNA helicase. Unwinds D-loops, R-loops, forked DNA and G-quadruplex DNA. The sequence is that of ATP-dependent DNA helicase DinG from Shigella flexneri.